A 1478-amino-acid polypeptide reads, in one-letter code: Fanconi anemia group D2 protein homolog (1478 aa).

The interval 33-53 (NISVESSSGGSEENIPASQEH) is disordered. Low complexity predominate over residues 35–45 (SVESSSGGSEE). A Glycyl lysine isopeptide (Lys-Gly) (interchain with G-Cter in ubiquitin) cross-link involves residue lysine 595. Disordered regions lie at residues 896–918 (NQNQ…PEPD) and 1420–1478 (TPRS…SKCF). Over residues 1429 to 1442 (ENSDDELPADDTSV) the composition is skewed to acidic residues. A compositionally biased stretch (basic residues) spans 1468 to 1478 (RSKSSSRSKCF).

The protein belongs to the Fanconi anemia protein FANCD2 family. In terms of assembly, homodimer; cannot be ubiquitinated and does not bind DNA. Part of a Fanci-Fancd2 heterodimeric complex that binds and scans dsDNA for DNA damage. Interacts with Fancl (via C-terminus). Post-translationally, monoubiquitinated by Fancl in response to ionising radiation.

The protein resides in the nucleus. Functionally, required for maintenance of chromosomal stability. Together with Fancl, and probably Fanci, involved in DNA repair of damage caused by agents that induce interstrand cross-links but not agents that cause double strand breaks. Required for S phase checkpoint activation in response to ionizing radiation induced DNA damage. The protein is Fanconi anemia group D2 protein homolog of Drosophila melanogaster (Fruit fly).